The chain runs to 193 residues: MEHTLPPLPFDKNALAPHMSEETLEYHYGKHHQTYVTNLNKLIPGTEFENLSLEEIVKKSSGGVFNNSAQVWNHTFFWNSLSPKGGGAPTGALADAINAKYGSFDKFKEEFAKVATGTFGSGWTWLVKKTDGTVDIVSTSNAATPLTTDAKALLTIDVWEHAYYIDYRNARPKFIEAYWNIANWDFAAKNFGA.

Fe cation-binding residues include histidine 27, histidine 74, aspartate 157, and histidine 161.

This sequence belongs to the iron/manganese superoxide dismutase family. Monomer. The cofactor is Fe cation.

It carries out the reaction 2 superoxide + 2 H(+) = H2O2 + O2. Functionally, destroys superoxide anion radicals which are normally produced within the cells and which are toxic to biological systems. Involved in the metabolism of 4-aminophenol. May have an indirect role in hydroxyquinol metabolism by scavenging and detoxifying reactive species that promote its auto-oxidation. The chain is Superoxide dismutase [Fe] from Burkholderia sp.